Consider the following 876-residue polypeptide: Alanine--tRNA ligase (876 aa).

4 residues coordinate Zn(2+): histidine 565, histidine 569, cysteine 667, and histidine 671.

The protein belongs to the class-II aminoacyl-tRNA synthetase family. It depends on Zn(2+) as a cofactor.

Its subcellular location is the cytoplasm. The enzyme catalyses tRNA(Ala) + L-alanine + ATP = L-alanyl-tRNA(Ala) + AMP + diphosphate. Catalyzes the attachment of alanine to tRNA(Ala) in a two-step reaction: alanine is first activated by ATP to form Ala-AMP and then transferred to the acceptor end of tRNA(Ala). Also edits incorrectly charged Ser-tRNA(Ala) and Gly-tRNA(Ala) via its editing domain. This is Alanine--tRNA ligase from Staphylococcus aureus (strain USA300).